Reading from the N-terminus, the 421-residue chain is Imidazolonepropionase (421 aa).

Fe(3+) is bound by residues His-81 and His-83. Zn(2+)-binding residues include His-81 and His-83. 4-imidazolone-5-propanoate contacts are provided by Arg-90, Tyr-153, and His-186. Tyr-153 contacts N-formimidoyl-L-glutamate. Residue His-251 participates in Fe(3+) binding. Residue His-251 coordinates Zn(2+). 4-imidazolone-5-propanoate is bound at residue Glu-254. Asp-326 contacts Fe(3+). Zn(2+) is bound at residue Asp-326. Positions 328 and 330 each coordinate N-formimidoyl-L-glutamate. 4-imidazolone-5-propanoate is bound at residue Ser-331.

The protein belongs to the metallo-dependent hydrolases superfamily. HutI family. The cofactor is Zn(2+). It depends on Fe(3+) as a cofactor.

The protein resides in the cytoplasm. The catalysed reaction is 4-imidazolone-5-propanoate + H2O = N-formimidoyl-L-glutamate. The protein operates within amino-acid degradation; L-histidine degradation into L-glutamate; N-formimidoyl-L-glutamate from L-histidine: step 3/3. Its function is as follows. Catalyzes the hydrolytic cleavage of the carbon-nitrogen bond in imidazolone-5-propanoate to yield N-formimidoyl-L-glutamate. It is the third step in the universal histidine degradation pathway. The chain is Imidazolonepropionase from Streptococcus sanguinis (strain SK36).